Here is a 215-residue protein sequence, read N- to C-terminus: 2-phospho-L-lactate guanylyltransferase (215 aa).

Belongs to the CofC family. Homodimer.

The catalysed reaction is (2S)-2-phospholactate + GTP + H(+) = (2S)-lactyl-2-diphospho-5'-guanosine + diphosphate. The protein operates within cofactor biosynthesis; coenzyme F420 biosynthesis. Functionally, guanylyltransferase that catalyzes the activation of (2S)-2-phospholactate (2-PL) as (2S)-lactyl-2-diphospho-5'-guanosine, via the condensation of 2-PL with GTP. It is involved in the biosynthesis of coenzyme F420, a hydride carrier cofactor. This chain is 2-phospho-L-lactate guanylyltransferase, found in Methanococcoides burtonii (strain DSM 6242 / NBRC 107633 / OCM 468 / ACE-M).